A 244-amino-acid polypeptide reads, in one-letter code: Glutathione S-transferase theta-2B (244 aa).

Residues 2–82 (GLELFLDLVS…YLSCKYQTPD (81 aa)) enclose the GST N-terminal domain. Glutathione contacts are provided by residues 40-41 (HK), 53-54 (KL), 66-67 (ES), and 104-107 (DCIR). The region spanning 88-224 (DLQARARVHE…SILEQAAKKT (137 aa)) is the GST C-terminal domain.

The protein belongs to the GST superfamily. Theta family. As to quaternary structure, homodimer. Expressed at low levels in liver. In lung, expressed at low levels in ciliated bronchiolar cells, alveolar macrophages and alveolar type II cells.

It is found in the cytoplasm. The protein resides in the cytosol. The catalysed reaction is RX + glutathione = an S-substituted glutathione + a halide anion + H(+). Its function is as follows. Conjugation of reduced glutathione to a wide number of exogenous and endogenous hydrophobic electrophiles. Has a sulfatase activity. The polypeptide is Glutathione S-transferase theta-2B (GSTT2B) (Homo sapiens (Human)).